The sequence spans 201 residues: MTEKAPEPHVEEDDDDELDSKLNYKPPPQKSLKELQEMDKDDESLIKYKKTLLGDGPVVTDPKAPNVVVTRLTLVCESAPGPITMDLTGDLEALKKETIVLKEGSEYRVKIHFKVNRDIVSGLKYVQHTYRTGVKVDKATFMVGSYGPRPEEYEFLTPVEEAPKGMLARGTYHNKSFFTDDDKQDHLSWEWNLSIKKEWTE.

The interval 1–38 (MTEKAPEPHVEEDDDDELDSKLNYKPPPQKSLKELQEM) is disordered. N-acetylthreonine is present on Thr2. Lys21 is modified (N6-acetyllysine). Tyr24 carries the phosphotyrosine modification. Residues Lys25, Lys40, Lys47, Lys102, and Lys124 each carry the N6-acetyllysine modification. Residue Ser145 is modified to Phosphoserine. Lys175 carries the post-translational modification N6-acetyllysine.

The protein belongs to the Rho GDI family. Interacts with RHOA. Interacts with RAC1. Interacts with RAC2. Interacts with CDC42. In terms of tissue distribution, detected in bone marrow, thymus and spleen.

It is found in the cytoplasm. The protein resides in the cytosol. In terms of biological role, regulates the GDP/GTP exchange reaction of the Rho proteins by inhibiting the dissociation of GDP from them, and the subsequent binding of GTP to them. Regulates reorganization of the actin cytoskeleton mediated by Rho family members. The protein is Rho GDP-dissociation inhibitor 2 (ARHGDIB) of Homo sapiens (Human).